The chain runs to 284 residues: Pantothenate synthetase (284 aa).

Residue 30-37 (MGYLHEGH) participates in ATP binding. The active-site Proton donor is the histidine 37. Glutamine 61 provides a ligand contact to (R)-pantoate. Position 61 (glutamine 61) interacts with beta-alanine. An ATP-binding site is contributed by 147–150 (GQKD). (R)-pantoate is bound at residue glutamine 153. Residues valine 176 and 184 to 187 (KSSR) contribute to the ATP site.

It belongs to the pantothenate synthetase family. As to quaternary structure, homodimer.

The protein localises to the cytoplasm. The catalysed reaction is (R)-pantoate + beta-alanine + ATP = (R)-pantothenate + AMP + diphosphate + H(+). The protein operates within cofactor biosynthesis; (R)-pantothenate biosynthesis; (R)-pantothenate from (R)-pantoate and beta-alanine: step 1/1. Its function is as follows. Catalyzes the condensation of pantoate with beta-alanine in an ATP-dependent reaction via a pantoyl-adenylate intermediate. The chain is Pantothenate synthetase from Lysinibacillus sphaericus (strain C3-41).